The sequence spans 62 residues: Large ribosomal subunit protein uL30 (62 aa).

The protein belongs to the universal ribosomal protein uL30 family. As to quaternary structure, part of the 50S ribosomal subunit.

The sequence is that of Large ribosomal subunit protein uL30 from Roseobacter denitrificans (strain ATCC 33942 / OCh 114) (Erythrobacter sp. (strain OCh 114)).